We begin with the raw amino-acid sequence, 771 residues long: Solute carrier family 7 member 14 (771 aa).

6 helical membrane-spanning segments follow: residues 58-78, 83-103, 130-150, 187-207, 216-236, and 251-271; these read LISL…SGLV, AGPG…LSGV, FVAF…TAAG, YPDL…ALGV, VLNV…FFFI, and WSGV…FDII. N282 is a glycosylation site (N-linked (GlcNAc...) asparagine). 5 helical membrane-spanning segments follow: residues 291-311, 336-356, 360-380, 384-404, and 407-427; these read ASLV…TLMV, FVVA…SLFP, VIYA…VSSY, PVVA…LVSL, and LIEM…VCVL. A phosphoserine mark is found at S465, S468, and S488. 4 helical membrane-spanning segments follow: residues 565 to 585, 596 to 616, 628 to 648, and 655 to 675; these read VTIC…FIIF, WAIL…FVIL, MAPC…YLML, and WIRF…YGIW. Residue N676 is glycosylated (N-linked (GlcNAc...) asparagine). The segment at 712-771 is disordered; that stretch reads TEGESQENWGGPAEDKGFYYQQMSDTQPNTRTSSKAKSKSKHKQNSEALIANDELDYSPE. Over residues 732-743 the composition is skewed to polar residues; the sequence is QQMSDTQPNTRT. Over residues 745–754 the composition is skewed to basic residues; the sequence is SKAKSKSKHK. Phosphoserine occurs at positions 757 and 769.

It belongs to the amino acid-polyamine-organocation (APC) superfamily. Cationic amino acid transporter (CAT) (TC 2.A.3.3) family.

It is found in the lysosome membrane. The enzyme catalyses 4-aminobutanoate(in) = 4-aminobutanoate(out). Functionally, imports 4-aminobutanoate (GABA) into lysosomes. May act as a GABA sensor that regulates mTORC2-dependent INS signaling and gluconeogenesis. The transport mechanism and substrate selectivity remain to be elucidated. This is Solute carrier family 7 member 14 from Bos taurus (Bovine).